A 199-amino-acid chain; its full sequence is Glycerol-3-phosphate acyltransferase (199 aa).

5 consecutive transmembrane segments (helical) span residues 4–24 (FALF…AILI), 56–76 (LAVL…GYYL), 80–100 (QFEL…PIFF), 115–135 (IAPI…FVFL), and 154–176 (YVWW…LIYR).

The protein belongs to the PlsY family. In terms of assembly, probably interacts with PlsX.

The protein localises to the cell inner membrane. It catalyses the reaction an acyl phosphate + sn-glycerol 3-phosphate = a 1-acyl-sn-glycero-3-phosphate + phosphate. It participates in lipid metabolism; phospholipid metabolism. Its function is as follows. Catalyzes the transfer of an acyl group from acyl-phosphate (acyl-PO(4)) to glycerol-3-phosphate (G3P) to form lysophosphatidic acid (LPA). This enzyme utilizes acyl-phosphate as fatty acyl donor, but not acyl-CoA or acyl-ACP. This Haemophilus influenzae (strain PittEE) protein is Glycerol-3-phosphate acyltransferase.